The sequence spans 558 residues: Membrane protein insertase YidC (558 aa).

A run of 6 helical transmembrane segments spans residues V6 to P26, L326 to F348, G355 to F377, L424 to I444, V469 to I489, and I512 to V532.

This sequence belongs to the OXA1/ALB3/YidC family. Type 1 subfamily. As to quaternary structure, interacts with the Sec translocase complex via SecD. Specifically interacts with transmembrane segments of nascent integral membrane proteins during membrane integration.

The protein resides in the cell inner membrane. In terms of biological role, required for the insertion and/or proper folding and/or complex formation of integral membrane proteins into the membrane. Involved in integration of membrane proteins that insert both dependently and independently of the Sec translocase complex, as well as at least some lipoproteins. Aids folding of multispanning membrane proteins. The chain is Membrane protein insertase YidC from Pelagibacter ubique (strain HTCC1062).